A 71-amino-acid chain; its full sequence is MPSQQTETLNKMIEDISQKLNMLNVGVIRAEDFSDEKIEDLTYLHQMVMKKTSFSPSEMQAIAEELASLRK.

It belongs to the UPF0435 family.

The chain is UPF0435 protein RBAM_008100 from Bacillus velezensis (strain DSM 23117 / BGSC 10A6 / LMG 26770 / FZB42) (Bacillus amyloliquefaciens subsp. plantarum).